A 1413-amino-acid polypeptide reads, in one-letter code: Sushi, nidogen and EGF-like domain-containing protein 1 (1413 aa).

A signal peptide spans 1–24 (MRHGVAWALLVAAALGLGARGVRG). The 156-residue stretch at 103 to 258 (AFWADVDNRR…GRWAFRIDDA (156 aa)) folds into the NIDO domain. 2 N-linked (GlcNAc...) asparagine glycosylation sites follow: asparagine 145 and asparagine 204. EGF-like domains lie at 268–309 (TTSV…RRCH), 311–347 (DVNECASQPCQNGGTCTHGINSFRCQCPAGFGGPTCE), and 349–385 (AQSPCDTKECQHGGQCQVENGSAVCVCQAGYTGAACE). Cystine bridges form between cysteine 272-cysteine 284, cysteine 278-cysteine 297, cysteine 299-cysteine 308, cysteine 315-cysteine 326, cysteine 320-cysteine 335, cysteine 337-cysteine 346, cysteine 353-cysteine 364, cysteine 358-cysteine 373, cysteine 375-cysteine 384, cysteine 391-cysteine 402, cysteine 396-cysteine 411, cysteine 413-cysteine 422, cysteine 433-cysteine 444, cysteine 438-cysteine 453, cysteine 455-cysteine 464, cysteine 472-cysteine 480, cysteine 474-cysteine 488, and cysteine 490-cysteine 499. Asparagine 292 carries an N-linked (GlcNAc...) asparagine glycan. The 23-residue stretch at 352–374 (PCDTKECQHGGQCQVENGSAVCV) folds into the Follistatin-like 1 domain. A glycan (N-linked (GlcNAc...) asparagine) is linked at asparagine 368. In terms of domain architecture, EGF-like 4; calcium-binding spans 387–423 (DVDDCSPDPCLNGGSCVDLVGNYTCLCAEPFKGLRCE). Asparagine 408 carries an N-linked (GlcNAc...) asparagine glycan. 2 EGF-like domains span residues 429-465 (VPDACLSAPCHNGGTCVDADQGYVCECPEGFMGLDCR) and 468-500 (VPDDCECRNGGRCLGANTTLCQCPLGFFGLLCE). N-linked (GlcNAc...) asparagine glycosylation occurs at asparagine 484. The region spanning 507 to 530 (PCNMNTQCPDGGYCMEHGGSYLCV) is the Follistatin-like 2 domain. Residue asparagine 536 is glycosylated (N-linked (GlcNAc...) asparagine). EGF-like domains lie at 541 to 577 (LPSPCDSDPCFNGGSCDAHDDSYTCECPRGFHGKHCE), 580 to 616 (RPHLCSSGPCRNGGTCKEAGGEYHCSCPYRFTGRHCE), 619 to 655 (KPDSCASGPCHNGGTCFHYIGKYKCDCPPGFSGRHCE), and 657 to 693 (APSPCFRSPCVNGGTCEDRDTDFFCHCQAGYMGRRCQ). 26 cysteine pairs are disulfide-bonded: cysteine 545–cysteine 556, cysteine 550–cysteine 565, cysteine 567–cysteine 576, cysteine 584–cysteine 595, cysteine 589–cysteine 604, cysteine 606–cysteine 615, cysteine 623–cysteine 634, cysteine 628–cysteine 643, cysteine 645–cysteine 654, cysteine 661–cysteine 672, cysteine 666–cysteine 681, cysteine 683–cysteine 692, cysteine 698–cysteine 739, cysteine 724–cysteine 751, cysteine 757–cysteine 768, cysteine 762–cysteine 777, cysteine 779–cysteine 788, cysteine 795–cysteine 806, cysteine 800–cysteine 815, cysteine 817–cysteine 826, cysteine 833–cysteine 844, cysteine 838–cysteine 853, cysteine 855–cysteine 864, cysteine 871–cysteine 882, cysteine 876–cysteine 891, and cysteine 893–cysteine 902. One can recognise a Sushi domain in the interval 696–753 (VDCGPPEEVKHATLRFNGTRLGAVALYACDRGYSLSAPSRIRVCQPHGVWSEPPQCLE). The N-linked (GlcNAc...) asparagine glycan is linked to asparagine 712. Residues 753 to 789 (EIDECRSQPCLHGGSCQDRVAGYLCLCSTGYEGAHCE) form the EGF-like 11; calcium-binding domain. Residues 791–827 (ERDECRAHPCRNGGSCRNLPGAYVCRCPAGFVGVHCE) enclose the EGF-like 12; calcium-binding domain. EGF-like domains are found at residues 829 to 865 (EVDACDSSPCQHGGRCESGGGAYLCVCPESFFGYHCE) and 867 to 903 (VSDPCFSSPCGGRGYCLASNGSHSCTCKVGYTGEDCA). A glycan (N-linked (GlcNAc...) asparagine) is linked at asparagine 886. Fibronectin type-III domains follow at residues 908–1006 (PPTA…TRPR), 1007–1105 (PVEG…TRPL), and 1106–1200 (PPAN…SPRD). 4 N-linked (GlcNAc...) asparagine glycosylation sites follow: asparagine 977, asparagine 1015, asparagine 1109, and asparagine 1139. A disordered region spans residues 1206 to 1226 (WHQGGHHPRVLKNRPPPARLP). Residues 1207 to 1217 (HQGGHHPRVLK) show a composition bias toward basic residues. One can recognise an EGF-like 15 domain in the interval 1307–1343 (VPGNCSENPCQNGGTCVPGADAHSCDCGPGFKGRRCE). An N-linked (GlcNAc...) asparagine glycan is attached at asparagine 1310. 3 disulfides stabilise this stretch: cysteine 1311–cysteine 1322, cysteine 1316–cysteine 1331, and cysteine 1333–cysteine 1342. Residues 1394-1413 (TSLKKTPNRKQSKSQTLEKS) form a disordered region.

Post-translationally, phosphorylated on serine and threonine residues. In terms of processing, N-glycosylated.

Its subcellular location is the secreted. The protein localises to the extracellular space. It localises to the extracellular matrix. The polypeptide is Sushi, nidogen and EGF-like domain-containing protein 1 (Homo sapiens (Human)).